We begin with the raw amino-acid sequence, 99 residues long: Acylphosphatase-1 (99 aa).

Ala2 bears the N-acetylalanine mark. Positions 9-99 constitute an Acylphosphatase-like domain; sequence SVDYEIFGKV…LDYSDFQIVK (91 aa). Residues Arg24 and Asn42 contribute to the active site.

It belongs to the acylphosphatase family. Organ-common type isozyme is found in many different tissues.

It carries out the reaction an acyl phosphate + H2O = a carboxylate + phosphate + H(+). This chain is Acylphosphatase-1 (ACYP1), found in Homo sapiens (Human).